Here is a 419-residue protein sequence, read N- to C-terminus: Peptide chain release factor subunit 1 (419 aa).

This sequence belongs to the eukaryotic release factor 1 family. In terms of assembly, heterodimer of two subunits, one of which binds GTP.

The protein resides in the cytoplasm. Functionally, directs the termination of nascent peptide synthesis (translation) in response to the termination codons UAA, UAG and UGA. In Methanococcus maripaludis (strain C6 / ATCC BAA-1332), this protein is Peptide chain release factor subunit 1.